Reading from the N-terminus, the 436-residue chain is Trigger factor (436 aa).

The PPIase FKBP-type domain maps to 163 to 248 (GDTVVIDFDG…IHEVKEKQLP (86 aa)).

It belongs to the FKBP-type PPIase family. Tig subfamily.

The protein localises to the cytoplasm. It catalyses the reaction [protein]-peptidylproline (omega=180) = [protein]-peptidylproline (omega=0). Involved in protein export. Acts as a chaperone by maintaining the newly synthesized protein in an open conformation. Functions as a peptidyl-prolyl cis-trans isomerase. This chain is Trigger factor, found in Levilactobacillus brevis (strain ATCC 367 / BCRC 12310 / CIP 105137 / JCM 1170 / LMG 11437 / NCIMB 947 / NCTC 947) (Lactobacillus brevis).